Consider the following 373-residue polypeptide: ATP-dependent 6-phosphofructokinase (373 aa).

Residues Gly-12, Arg-74 to Asp-75, and Gly-110 to Thr-113 each bind ATP. Substrate is bound by residues Thr-133–Asp-135, Arg-170, Met-177–His-179, Glu-230, Arg-291, and Tyr-297–Arg-300. Asp-135 acts as the Proton acceptor in catalysis.

Belongs to the phosphofructokinase type A (PFKA) family. Mixed-substrate PFK group III subfamily. In terms of assembly, homodimer or homotetramer. Mg(2+) is required as a cofactor.

Its subcellular location is the cytoplasm. The catalysed reaction is beta-D-fructose 6-phosphate + ATP = beta-D-fructose 1,6-bisphosphate + ADP + H(+). It participates in carbohydrate degradation; glycolysis; D-glyceraldehyde 3-phosphate and glycerone phosphate from D-glucose: step 3/4. In terms of biological role, catalyzes the phosphorylation of D-fructose 6-phosphate to fructose 1,6-bisphosphate by ATP, the first committing step of glycolysis. This chain is ATP-dependent 6-phosphofructokinase, found in Propionibacterium freudenreichii subsp. shermanii (strain ATCC 9614 / DSM 4902 / CIP 103027 / NCIMB 8099 / CIRM-BIA1).